The primary structure comprises 122 residues: Large ribosomal subunit protein uL14 (122 aa).

It belongs to the universal ribosomal protein uL14 family. As to quaternary structure, part of the 50S ribosomal subunit. Forms a cluster with proteins L3 and L19. In the 70S ribosome, L14 and L19 interact and together make contacts with the 16S rRNA in bridges B5 and B8.

Binds to 23S rRNA. Forms part of two intersubunit bridges in the 70S ribosome. In Burkholderia lata (strain ATCC 17760 / DSM 23089 / LMG 22485 / NCIMB 9086 / R18194 / 383), this protein is Large ribosomal subunit protein uL14.